A 524-amino-acid polypeptide reads, in one-letter code: Cytochrome P450 monooxygenase oblB (524 aa).

Transmembrane regions (helical) follow at residues 18–38, 225–245, and 322–342; these read ILNA…GLVI, FHSG…IHLI, and VLIG…VYYI. Cys-466 lines the heme pocket.

It belongs to the cytochrome P450 family. Requires heme as cofactor.

The protein localises to the membrane. It catalyses the reaction ophiobolin F + 4 reduced [NADPH--hemoprotein reductase] + 4 O2 = ophiobolin C + 4 oxidized [NADPH--hemoprotein reductase] + 6 H2O + 4 H(+). The protein operates within secondary metabolite biosynthesis; terpenoid biosynthesis. Cytochrome P450 monooxygenase; part of the gene cluster that mediates the biosynthesis of the sesterterpenes ophiobolins, fungal phytotoxins with potential anti-cancer activities. The first step of the pathway is performed by the sesterterpene synthase oblA that possesses both prenyl transferase and terpene cyclase activity, converting isopentenyl diphosphate and dimethylallyl diphosphate into geranylfarnesyl diphosphate (GFPP) and further converting GFPP into ophiobolin F, respectively. Other sesterterpenoids (C(25) terpenoids) are found as minor products of oblA. The cytochrome P450 monooxygenase oblB then catalyzes a four-step oxidative transformation of ophiobolin F to yield ophiobolin C. The FAD-dependent oxidoreductase oblC might be involved in a later oxidation step that produces ophiobolin A. This Cochliobolus heterostrophus (strain C5 / ATCC 48332 / race O) (Southern corn leaf blight fungus) protein is Cytochrome P450 monooxygenase oblB.